A 668-amino-acid chain; its full sequence is DNA-directed RNA polymerase subunit beta' (668 aa).

Cys71, Cys73, Cys91, and Cys94 together coordinate Zn(2+). Positions 505, 507, and 509 each coordinate Mg(2+).

Belongs to the RNA polymerase beta' chain family. RpoC1 subfamily. As to quaternary structure, in plastids the minimal PEP RNA polymerase catalytic core is composed of four subunits: alpha, beta, beta', and beta''. When a (nuclear-encoded) sigma factor is associated with the core the holoenzyme is formed, which can initiate transcription. Requires Mg(2+) as cofactor. It depends on Zn(2+) as a cofactor.

It localises to the plastid. It is found in the chloroplast. The enzyme catalyses RNA(n) + a ribonucleoside 5'-triphosphate = RNA(n+1) + diphosphate. In terms of biological role, DNA-dependent RNA polymerase catalyzes the transcription of DNA into RNA using the four ribonucleoside triphosphates as substrates. The polypeptide is DNA-directed RNA polymerase subunit beta' (Mesostigma viride (Green alga)).